The chain runs to 432 residues: Ribosome biogenesis protein WDR12 homolog (432 aa).

The tract at residues 13–97 (LQIRLVALNK…ESVIEVVYFQ (85 aa)) is ubiquitin-like (UBL) domain. WD repeat units follow at residues 109–146 (LHSD…YAIF), 148–190 (GHES…KSVE), 197–236 (GHTQ…KDDD), 265–303 (GHTD…NKSD), 305–345 (NVNK…DQTV), 352–392 (SHKN…APLY), and 396–432 (GHED…AQRS).

This sequence belongs to the WD repeat WDR12/YTM1 family.

The protein resides in the nucleus. The protein localises to the nucleolus. Its subcellular location is the nucleoplasm. Functionally, required for maturation of ribosomal RNAs and formation of the large ribosomal subunit. This Trichoplax adhaerens (Trichoplax reptans) protein is Ribosome biogenesis protein WDR12 homolog.